The chain runs to 287 residues: Gliotoxin thiomethyltransferase GtmA (287 aa).

Thr-27 and Ala-54 together coordinate S-adenosyl-L-methionine. A disulfide bridge connects residues Cys-55 and Cys-80. S-adenosyl-L-methionine-binding residues include Asp-82, Met-87, Asn-109, Ala-110, Ala-126, and Arg-248.

This sequence belongs to the class I-like SAM-binding methyltransferase superfamily.

Its subcellular location is the cytoplasm. It carries out the reaction a thiol + S-adenosyl-L-methionine = a methyl thioether + S-adenosyl-L-homocysteine + H(+). In terms of biological role, S-methyltransferase that catalyzes the irreversible conversion of the secondary metabolite gliotoxin to bis(methylthio)gliotoxin (BmGT). Gliotoxin, a member of the epipolythiodioxopiperazine (ETP) class of toxins, is characterized by a disulfide bridged cyclic dipeptide. Its thiol groups are essential for bioactivity, as they conjugate to sulfur-containing proteins, disturb the intracellular redox equilibrium, and generate reactive oxygen species by cycling between reduced and oxidized states. The enzyme prevents self-intoxication of the fungus by irreversible conversion of the toxic gliotoxin to a biologically inactive bis-thiomethylated derivative. Appears to negatively regulate gliotoxin biosynthesis. The chain is Gliotoxin thiomethyltransferase GtmA from Aspergillus fumigatus (strain ATCC MYA-4609 / CBS 101355 / FGSC A1100 / Af293) (Neosartorya fumigata).